Reading from the N-terminus, the 289-residue chain is BTB/POZ domain-containing protein KCTD7 (289 aa).

Residues 1–40 (MVVVTGREPDSRRPDGAMSSSDAEDDFLEPATPTATQAGH) are disordered. The BTB domain maps to 53–141 (VPLNIGGAHF…YAIGPLLEQL (89 aa)).

In terms of assembly, interacts with CUL3.

Its subcellular location is the cell membrane. The protein resides in the cytoplasm. It is found in the cytosol. May be involved in the control of excitability of cortical neurons. The polypeptide is BTB/POZ domain-containing protein KCTD7 (KCTD7) (Bos taurus (Bovine)).